The chain runs to 443 residues: KH domain-containing, RNA-binding, signal transduction-associated protein 1 (443 aa).

Positions 1 to 95 (MQRRDDPAAR…LLPPSATAAA (95 aa)) are disordered. A phosphoserine mark is found at S18 and S20. The residue at position 21 (K21) is an N6-acetyllysine. Position 29 is a phosphoserine (S29). The residue at position 33 (T33) is a Phosphothreonine. An asymmetric dimethylarginine; by PRMT1 mark is found at R45 and R52. Phosphoserine is present on S58. A compositionally biased stretch (pro residues) spans 61–72 (TQPPPLLPPSNP). The span at 81–95 (SAPTPLLPPSATAAA) shows a compositional bias: low complexity. The residue at position 84 (T84) is a Phosphothreonine; by MAPK1. Glycyl lysine isopeptide (Lys-Gly) (interchain with G-Cter in SUMO2) cross-links involve residues K96 and K102. Residues 100-260 (ENKYLPELMA…VKKFLVPDMM (161 aa)) are involved in homodimerization. A Phosphoserine modification is found at S113. A Glycyl lysine isopeptide (Lys-Gly) (interchain with G-Cter in SUMO2) cross-link involves residue K139. Phosphoserine is present on S150. The 27-residue stretch at 171–197 (NFVGKILGPQGNTIKRLQEETGAKISV) folds into the KH domain. K175 bears the N6-acetyllysine; alternate mark. K175 is covalently cross-linked (Glycyl lysine isopeptide (Lys-Gly) (interchain with G-Cter in SUMO2); alternate). T183 bears the Phosphothreonine mark. Residues 280–317 (PSRGRGVSVRGRGAAPPPPPVPRGRGVGPPRGALVRGT) form a disordered region. An omega-N-methylarginine mark is found at R282, R284, and R291. A compositionally biased stretch (low complexity) spans 283-293 (GRGVSVRGRGA). At R304 the chain carries Asymmetric dimethylarginine; by PRMT1. Residues 307 to 316 (GPPRGALVRG) are compositionally biased toward low complexity. Omega-N-methylarginine; by PRMT1 occurs at positions 310 and 315. R320 carries the post-translational modification Dimethylated arginine; alternate. R320 is modified (omega-N-methylarginine; by PRMT1; alternate). R325 carries the post-translational modification Omega-N-methylarginine; by PRMT1. A disordered region spans residues 326–345 (GATVTRGVPPPPTVRGAPTP). Dimethylated arginine; alternate occurs at positions 331 and 340. R331 and R340 each carry omega-N-methylarginine; by PRMT1; alternate. R331 is subject to Asymmetric dimethylarginine; alternate. The interaction with HNRNPA1 stretch occupies residues 351–443 (GIQRIPLPPT…AYREHPYGRY (93 aa)). The residue at position 387 (Y387) is a Phosphotyrosine. S390 is modified (phosphoserine). The segment at 400-420 (GHGELQDSYEAYGQDDWNGTR) is interaction with ZBTB7A. Positions 411-443 (YGQDDWNGTRPSLKAPPARPVKGAYREHPYGRY) are disordered. Residue K432 forms a Glycyl lysine isopeptide (Lys-Gly) (interchain with G-Cter in SUMO2) linkage. A compositionally biased stretch (basic and acidic residues) spans 434–443 (AYREHPYGRY). 3 positions are modified to phosphotyrosine; by PTK6: Y435, Y440, and Y443.

This sequence belongs to the KHDRBS family. As to quaternary structure, self-associates to form homooligomers when bound to RNA, oligomerization appears to be limited when binding to proteins. Interacts with KHDRBS3/SLIM-2. Forms a trimeric complex in the nucleus consisting of BANP, HDAC6 and KHDRBS1/SAM68; HDAC6 keeps KHDRBS1 in a deacetylated state which inhibits the inclusion of CD44 alternate exons. The complex is disrupted by MAPK1/MAPK3-mediated phosphorylation of BANP which results in BANP export to the cytoplasm. This facilitates acetylation of KHDRBS1 and CD44 variant exon inclusion. Interacts with KHDRBS2/SLIM-1; heterooligomer formation of KHDRBS family proteins may modulate RNA substrate specificity. Interacts with PIK3R1, PLCG1. Interacts with RASA1, GRB2, SRC, CBP, PRMT1, APC, HNRNPA1. Interacts with PTK6 (via SH3 and SH2 domains). Forms a complex with ILF2, ILF3, YLPM1, RBMX, NCOA5 and PPP1CA. Binds WBP4/FBP21 (via WW domains), FNBP4/FBP30 (via WW domains). Interacts (via Arg/Gly-rich-flanked Pro-rich regions) with FYN (via the SH3 domain). Interacts with the non-receptor tyrosine kinase SRMS; the interaction leads to phosphorylation of KHDRBS1. Interacts with ZBTB7A; negatively regulates KHDRBS1 splicing activity toward BCL2L1. Post-translationally, tyrosine phosphorylated by several non-receptor tyrosine kinases including LCK, FYN and JAK3. Also tyrosine phosphorylated by the non-receptor tyrosine kinase SRMS in an EGF-dependent manner. Phosphorylation by PTK6 negatively regulates its RNA binding ability. Phosphorylation by PTK6 at Tyr-440 dictates the nuclear localization of KHDRBS1. In terms of processing, acetylated. Positively correlates with ability to bind RNA. Deacetylated by HDAC6; this regulates alternative splicing by inhibiting the inclusion of CD44 alternate exons. Arginine methylation is required for nuclear localization, Inhibits interaction with Src-like SH3 domains, but not interaction with WW domains of WBP4/FBP21 and FNBP4/FBP30.

The protein resides in the nucleus. Its subcellular location is the cytoplasm. It localises to the membrane. In terms of biological role, recruited and tyrosine phosphorylated by several receptor systems, for example the T-cell, leptin and insulin receptors. Once phosphorylated, functions as an adapter protein in signal transduction cascades by binding to SH2 and SH3 domain-containing proteins. Role in G2-M progression in the cell cycle. Represses CBP-dependent transcriptional activation apparently by competing with other nuclear factors for binding to CBP. Also acts as a putative regulator of mRNA stability and/or translation rates and mediates mRNA nuclear export. Positively regulates the association of constitutive transport element (CTE)-containing mRNA with large polyribosomes and translation initiation. May not be involved in the nucleocytoplasmic export of unspliced (CTE)-containing RNA species. RNA-binding protein that plays a role in the regulation of alternative splicing and influences mRNA splice site selection and exon inclusion. Binds to RNA containing 5'-[AU]UAA-3' as a bipartite motif spaced by more than 15 nucleotides. Binds poly(A). Can regulate CD44 alternative splicing in a Ras pathway-dependent manner. In cooperation with HNRNPA1 modulates alternative splicing of BCL2L1 by promoting splicing toward isoform Bcl-X(S), and of SMN1. Can regulate alternative splicing of NRXN1 and NRXN3 in the laminin G-like domain 6 containing the evolutionary conserved neurexin alternative spliced segment 4 (AS4) involved in neurexin selective targeting to postsynaptic partners. In a neuronal activity-dependent manner cooperates synergistically with KHDRBS2/SLIM-1 in regulation of NRXN1 exon skipping at AS4. The cooperation with KHDRBS2/SLIM-1 is antagonistic for regulation of NXRN3 alternative splicing at AS4. The protein is KH domain-containing, RNA-binding, signal transduction-associated protein 1 of Rattus norvegicus (Rat).